A 277-amino-acid chain; its full sequence is Phosphatidylglycerol--prolipoprotein diacylglyceryl transferase (277 aa).

The next 4 membrane-spanning stretches (helical) occupy residues 18 to 38 (ISVK…LLLA), 51 to 71 (IIVD…RIYY), 89 to 109 (IWHG…TAVI), and 116 to 136 (ISFW…QAIG). An a 1,2-diacyl-sn-glycero-3-phospho-(1'-sn-glycerol)-binding site is contributed by R137. 3 consecutive transmembrane segments (helical) span residues 177-197 (QPTF…LLII), 205-225 (GELF…IEGM), and 235-255 (FRVS…LIIY).

The protein belongs to the Lgt family.

Its subcellular location is the cell membrane. It carries out the reaction L-cysteinyl-[prolipoprotein] + a 1,2-diacyl-sn-glycero-3-phospho-(1'-sn-glycerol) = an S-1,2-diacyl-sn-glyceryl-L-cysteinyl-[prolipoprotein] + sn-glycerol 1-phosphate + H(+). The protein operates within protein modification; lipoprotein biosynthesis (diacylglyceryl transfer). Functionally, catalyzes the transfer of the diacylglyceryl group from phosphatidylglycerol to the sulfhydryl group of the N-terminal cysteine of a prolipoprotein, the first step in the formation of mature lipoproteins. The protein is Phosphatidylglycerol--prolipoprotein diacylglyceryl transferase of Listeria innocua serovar 6a (strain ATCC BAA-680 / CLIP 11262).